A 217-amino-acid chain; its full sequence is Zinc finger CCHC-type and RNA-binding motif-containing protein 1 (217 aa).

The region spanning 10 to 88 is the RRM domain; the sequence is STVYVSNLPF…RVIKASIAID (79 aa). Residues 105 to 122 form a CCHC-type zinc finger; the sequence is SKCYECGESGHLSYACPK. Positions 120–217 are disordered; the sequence is CPKNMLGERE…YFSDEEELSD (98 aa). Over residues 145-163 the composition is skewed to acidic residues; sequence PEEEIEEVEVSEEEGEDPA. Residues S155, S210, and S216 each carry the phosphoserine modification.

As to quaternary structure, component of the U11/U12 snRNPs that are part of the U12-type spliceosome. Interacts with ZRSR1. In terms of tissue distribution, expressed at higher level in heart and testis, and at lower level in cerebellum. Weakly expressed at low level in liver.

It is found in the nucleus. The protein localises to the nucleoplasm. The protein is Zinc finger CCHC-type and RNA-binding motif-containing protein 1 (Zcrb1) of Mus musculus (Mouse).